A 276-amino-acid chain; its full sequence is Ribonuclease 3 (276 aa).

The region spanning 30–161 (LTAFIRSLFK…LTGAIYLDRG (132 aa)) is the RNase III domain. Residue Glu74 coordinates Mg(2+). The active site involves Asp78. Mg(2+) contacts are provided by Asp147 and Glu150. Glu150 is an active-site residue. Residues 188–257 (NHKSRLIEHT…AEEAMGALER (70 aa)) form the DRBM domain.

It belongs to the ribonuclease III family. As to quaternary structure, homodimer. It depends on Mg(2+) as a cofactor.

The protein localises to the cytoplasm. It catalyses the reaction Endonucleolytic cleavage to 5'-phosphomonoester.. Its function is as follows. Digests double-stranded RNA. Involved in the processing of primary rRNA transcript to yield the immediate precursors to the large and small rRNAs (23S and 16S). Processes some mRNAs, and tRNAs when they are encoded in the rRNA operon. Processes pre-crRNA and tracrRNA of type II CRISPR loci if present in the organism. In Chlorobium luteolum (strain DSM 273 / BCRC 81028 / 2530) (Pelodictyon luteolum), this protein is Ribonuclease 3.